The following is a 303-amino-acid chain: Diaminopimelate epimerase (303 aa).

Asn14 serves as a coordination point for substrate. Over residues 60–74 (PVSSAGATADAAAGR) the composition is skewed to low complexity. Residues 60–86 (PVSSAGATADAAAGRPPQPSAGRPPQP) are disordered. The span at 75 to 86 (PPQPSAGRPPQP) shows a compositional bias: pro residues. Asn97 contacts substrate. Cys106 functions as the Proton donor in the catalytic mechanism. Residues 107-108 (GN), Asn178, Asn209, and 227-228 (ER) contribute to the substrate site. Cys236 (proton acceptor) is an active-site residue. Residue 237–238 (GS) coordinates substrate.

The protein belongs to the diaminopimelate epimerase family. As to quaternary structure, homodimer.

It is found in the cytoplasm. It carries out the reaction (2S,6S)-2,6-diaminopimelate = meso-2,6-diaminopimelate. It functions in the pathway amino-acid biosynthesis; L-lysine biosynthesis via DAP pathway; DL-2,6-diaminopimelate from LL-2,6-diaminopimelate: step 1/1. Its function is as follows. Catalyzes the stereoinversion of LL-2,6-diaminopimelate (L,L-DAP) to meso-diaminopimelate (meso-DAP), a precursor of L-lysine and an essential component of the bacterial peptidoglycan. The chain is Diaminopimelate epimerase from Acidothermus cellulolyticus (strain ATCC 43068 / DSM 8971 / 11B).